A 70-amino-acid chain; its full sequence is UPF0426 protein ssl0294 (70 aa).

Belongs to the UPF0426 family.

The sequence is that of UPF0426 protein ssl0294 from Synechocystis sp. (strain ATCC 27184 / PCC 6803 / Kazusa).